The following is a 311-amino-acid chain: MKVAVLGAAGGIGQALALLLKLQLPAGTDLSLYDIAPVTPGVAVDVSHIPTAVNVKGFSGEDPTPALEGADVVLISAGVARKPGMDRSDLFNINAGIVRGLIEKVAVTCPKACVGIITNPVNTTVAIAAEVLKKAGVYDKRKLFGVTTLDVLRSETFVAELKGLNVSRTSVPVIGGHSGVTILPLLSQVQYAKWNEDEIEPLTKRIQNAGTEVLNAKAGGGSATLSMAQAAARFARSLVKGLSGETVVECTYVEGDGKYARFFSQPVRLGKEGVEEILPIGPLSNFEQQALENMLPTLRADIELGEKFING.

NAD(+) contacts are provided by residues 7–13 and Asp34; that span reads GAAGGIG. Positions 81 and 87 each coordinate substrate. NAD(+)-binding positions include Asn94 and 117–119; that span reads ITN. 2 residues coordinate substrate: Asn119 and Arg153. The Proton acceptor role is filled by His177. Met227 serves as a coordination point for NAD(+).

It belongs to the LDH/MDH superfamily. MDH type 1 family. In terms of assembly, homodimer.

The enzyme catalyses (S)-malate + NAD(+) = oxaloacetate + NADH + H(+). Catalyzes the reversible oxidation of malate to oxaloacetate. The sequence is that of Malate dehydrogenase (mdh) from Haemophilus influenzae (strain ATCC 51907 / DSM 11121 / KW20 / Rd).